The sequence spans 364 residues: Probable UDP-arabinopyranose mutase 1 (364 aa).

The short motif at aspartate 103–aspartate 105 is the DXD motif element. An N-linked (Glc...) arginine glycan is attached at arginine 151.

It belongs to the RGP family. In terms of assembly, homopentamer or homohexamer. Mn(2+) is required as a cofactor. Mg(2+) serves as cofactor. Reversibly glycosylated by UDP-glucose, UDP-xylose and UDP-galactose, but not UDP-mannose.

Its subcellular location is the secreted. The protein resides in the cell wall. It is found in the cell junction. It localises to the plasmodesma. The protein localises to the golgi apparatus. It carries out the reaction UDP-beta-L-arabinofuranose = UDP-beta-L-arabinopyranose. With respect to regulation, inhibited by inhibitor protein (IP) which may be a form of sucrose synthase. Its function is as follows. Probable UDP-L-arabinose mutase involved in the biosynthesis of cell wall non-cellulosic polysaccharides. Was initially shown to possess an autoglycosylating activity which is dependent on the presence of UDP-glucose and manganese. In Pisum sativum (Garden pea), this protein is Probable UDP-arabinopyranose mutase 1.